The sequence spans 296 residues: NADH-cytochrome b5 reductase 1 (296 aa).

A helical membrane pass occupies residues 11–31; that stretch reads LSAVLVKFAPFAVAVIAILAA. One can recognise an FAD-binding FR-type domain in the interval 47–152; that stretch reads SEFQNFVLKE…RGPKGAMVYT (106 aa). FAD-binding positions include 132-147 and 158-195; these read TTLK…GPKG and HIGM…KIDL.

It belongs to the flavoprotein pyridine nucleotide cytochrome reductase family. In terms of assembly, monomer. Component of the 2-(3-amino-3-carboxypropyl)histidine synthase complex composed of dph1, dph2, dph3 and a NADH-dependent reductase, predominantly cbr1. Requires FAD as cofactor.

The protein resides in the mitochondrion outer membrane. It carries out the reaction 2 Fe(III)-[cytochrome b5] + NADH = 2 Fe(II)-[cytochrome b5] + NAD(+) + H(+). The enzyme catalyses 2 Fe(3+)-[Dph3] + NADH = 2 Fe(2+)-[Dph3] + NAD(+) + H(+). It participates in protein modification; peptidyl-diphthamide biosynthesis. In terms of biological role, NADH-dependent reductase for dph3 and cytochrome b5. Required for the first step of diphthamide biosynthesis, a post-translational modification of histidine which occurs in elongation factor 2. Dph1 and dph2 transfer a 3-amino-3-carboxypropyl (ACP) group from S-adenosyl-L-methionine (SAM) to a histidine residue, the reaction is assisted by a reduction system comprising dph3 and a NADH-dependent reductase, predominantly cbr1. By reducing dph3, also involved in the formation of the tRNA wobble base modification mcm5s 2U (5-methoxycarbonylmethyl-2-thiouridine), mediated by the elongator complex. The cytochrome b5/NADH cytochrome b5 reductase electron transfer system supports the catalytic activity of several sterol biosynthetic enzymes. This Aspergillus terreus (strain NIH 2624 / FGSC A1156) protein is NADH-cytochrome b5 reductase 1 (cbr1).